Consider the following 1247-residue polypeptide: Nitric oxide synthase (1247 aa).

A disordered region spans residues 13–33 (EVAEGRESSKANHIGEERRGY). S146 serves as a coordination point for (6R)-L-erythro-5,6,7,8-tetrahydrobiopterin. C224 lines the heme b pocket. L-arginine-binding residues include Q287, W396, Y397, E401, and N406. Residues W487 and F500 each coordinate (6R)-L-erythro-5,6,7,8-tetrahydrobiopterin. Y515 provides a ligand contact to heme b. The tract at residues 537–557 (PRRKFNFKQIARAVKFTSKLF) is calmodulin-binding. A Flavodoxin-like domain is found at 567–766 (ATVLYATETG…AFRKWAPEVF (200 aa)). Residue 712 to 743 (VFALGSSAYPNFCAFGKYIDNILGELGGERLM) participates in FMN binding. Residues 795-1065 (NTVRYAPVAE…VRSAPSFHMS (271 aa)) form the FAD-binding FR-type domain. FAD-binding positions include 855–866 (YEPGDHVGIFPA) and 998–1008 (LQPRFYSISSS). Residues 1073–1091 (ILIGPGTGIAPFRSFWQEW) and 1170–1185 (KGHIYVCGDVTMAEHV) contribute to the NADP(+) site.

This sequence belongs to the NOS family. Requires heme b as cofactor. It depends on FAD as a cofactor. FMN serves as cofactor.

It catalyses the reaction 2 L-arginine + 3 NADPH + 4 O2 + H(+) = 2 L-citrulline + 2 nitric oxide + 3 NADP(+) + 4 H2O. Its activity is regulated as follows. Stimulated by calcium/calmodulin. Its function is as follows. Produces nitric oxide (NO) which is a messenger molecule with diverse functions throughout the body. Nitric oxide limits plasmodium development in the midgut. The protein is Nitric oxide synthase of Anopheles stephensi (Indo-Pakistan malaria mosquito).